The primary structure comprises 474 residues: Cysteine--tRNA ligase (474 aa).

Residue Cys28 participates in Zn(2+) binding. A 'HIGH' region motif is present at residues 30–40; sequence ITVYDLCHLGH. Cys209, His234, and Glu238 together coordinate Zn(2+). The 'KMSKS' region signature appears at 269–273; the sequence is KMSKS. Lys272 is an ATP binding site.

The protein belongs to the class-I aminoacyl-tRNA synthetase family. As to quaternary structure, monomer. Requires Zn(2+) as cofactor.

It is found in the cytoplasm. It catalyses the reaction tRNA(Cys) + L-cysteine + ATP = L-cysteinyl-tRNA(Cys) + AMP + diphosphate. The protein is Cysteine--tRNA ligase of Blochmanniella floridana.